The chain runs to 857 residues: Bifunctional uridylyltransferase/uridylyl-removing enzyme (857 aa).

Residues Met1–Glu322 are uridylyltransferase. Residues Ile323–Leu679 form a uridylyl-removing region. An HD domain is found at Val441–Leu563. ACT domains follow at residues Gln680–Gln760 and Leu788–Ile857.

Belongs to the GlnD family. It depends on Mg(2+) as a cofactor.

The enzyme catalyses [protein-PII]-L-tyrosine + UTP = [protein-PII]-uridylyl-L-tyrosine + diphosphate. It carries out the reaction [protein-PII]-uridylyl-L-tyrosine + H2O = [protein-PII]-L-tyrosine + UMP + H(+). With respect to regulation, uridylyltransferase (UTase) activity is inhibited by glutamine, while glutamine activates uridylyl-removing (UR) activity. Modifies, by uridylylation and deuridylylation, the PII regulatory proteins (GlnB and homologs), in response to the nitrogen status of the cell that GlnD senses through the glutamine level. Under low glutamine levels, catalyzes the conversion of the PII proteins and UTP to PII-UMP and PPi, while under higher glutamine levels, GlnD hydrolyzes PII-UMP to PII and UMP (deuridylylation). Thus, controls uridylylation state and activity of the PII proteins, and plays an important role in the regulation of nitrogen assimilation and metabolism. The polypeptide is Bifunctional uridylyltransferase/uridylyl-removing enzyme (Cupriavidus metallidurans (strain ATCC 43123 / DSM 2839 / NBRC 102507 / CH34) (Ralstonia metallidurans)).